An 883-amino-acid polypeptide reads, in one-letter code: Putative pentatricopeptide repeat-containing protein At1g13800 (883 aa).

PPR repeat units lie at residues 145-180, 181-215, 216-251, 253-285, 290-324, 325-359, 360-394, 395-429, 430-464, 465-499, 500-534, 537-561, 563-598, 599-633, 634-668, 697-731, 760-794, 795-829, and 830-864; these read LIRV…GRAP, DIKA…GLDA, DAHT…TRNP, VFYL…NILV, LGIA…GIDP, DVYV…RKRI, NCVI…NISL, DRVC…GIAP, DVIN…GKTP, DIVI…GVKP, TYVT…SREN, SMVK…LEFP, PKSV…GVEP, EKSM…KIVP, DLFT…DVKP, DVVY…EIVP, DVFY…GVDP, DAAP…GVKP, and DVVP…GIKP.

The protein belongs to the PPR family. P subfamily.

The chain is Putative pentatricopeptide repeat-containing protein At1g13800 from Arabidopsis thaliana (Mouse-ear cress).